Consider the following 529-residue polypeptide: BAR/IMD domain-containing adapter protein 2-like 2 (529 aa).

The region spanning Met-1 to Leu-239 is the IMD domain. 2 disordered regions span residues Glu-221–Arg-332 and Asn-399–Arg-529. A phosphoserine mark is found at Ser-231, Ser-272, and Ser-304. Positions Ser-301–Ser-317 are enriched in low complexity. A compositionally biased stretch (gly residues) spans Arg-321–Ala-331. The 64-residue stretch at Gly-329–Glu-392 folds into the SH3 domain. The span at Gly-439–His-459 shows a compositional bias: polar residues. Residues Pro-473–Gly-484 are compositionally biased toward low complexity. Phosphoserine is present on residues Ser-479 and Ser-482.

It is found in the cell membrane. The protein localises to the cell junction. It localises to the cytoplasmic vesicle membrane. In terms of biological role, phosphoinositides-binding protein that induces the formation of planar or gently curved membrane structures. Binds to phosphoinositides, including to phosphatidylinositol 4,5-bisphosphate (PtdIns(4,5)P2) headgroups. There seems to be no clear preference for a specific phosphoinositide. The chain is BAR/IMD domain-containing adapter protein 2-like 2 (BAIAP2L2) from Bos taurus (Bovine).